Reading from the N-terminus, the 329-residue chain is Elongation factor Ts (329 aa).

The tract at residues 79–82 (TDFV) is involved in Mg(2+) ion dislocation from EF-Tu.

Belongs to the EF-Ts family.

Its subcellular location is the cytoplasm. Functionally, associates with the EF-Tu.GDP complex and induces the exchange of GDP to GTP. It remains bound to the aminoacyl-tRNA.EF-Tu.GTP complex up to the GTP hydrolysis stage on the ribosome. The chain is Elongation factor Ts from Phocaeicola vulgatus (strain ATCC 8482 / DSM 1447 / JCM 5826 / CCUG 4940 / NBRC 14291 / NCTC 11154) (Bacteroides vulgatus).